A 499-amino-acid polypeptide reads, in one-letter code: Glutamate--tRNA ligase (499 aa).

The 'HIGH' region signature appears at 12–22 (PSPTGHLHIGN). The 'KMSKS' region motif lies at 259 to 263 (KLSKR). Lys-262 is an ATP binding site.

Belongs to the class-I aminoacyl-tRNA synthetase family. Glutamate--tRNA ligase type 1 subfamily. As to quaternary structure, monomer.

The protein localises to the cytoplasm. It catalyses the reaction tRNA(Glu) + L-glutamate + ATP = L-glutamyl-tRNA(Glu) + AMP + diphosphate. In terms of biological role, catalyzes the attachment of glutamate to tRNA(Glu) in a two-step reaction: glutamate is first activated by ATP to form Glu-AMP and then transferred to the acceptor end of tRNA(Glu). The polypeptide is Glutamate--tRNA ligase (Lactobacillus acidophilus (strain ATCC 700396 / NCK56 / N2 / NCFM)).